Here is a 457-residue protein sequence, read N- to C-terminus: Bifunctional protein GlmU (457 aa).

The segment at 1-229 (MDLAAVILAA…PVEVTGINDR (229 aa)) is pyrophosphorylase. UDP-N-acetyl-alpha-D-glucosamine-binding positions include 8–11 (LAAG), K22, Q72, and 77–78 (GT). D102 serves as a coordination point for Mg(2+). UDP-N-acetyl-alpha-D-glucosamine contacts are provided by G139, E154, N169, and N227. N227 contacts Mg(2+). Residues 230–250 (RQLAEVEKYLRRRVLEDLMQS) are linker. An N-acetyltransferase region spans residues 251-457 (GVTVLDPAST…WAAKKRDKKV (207 aa)). 2 residues coordinate UDP-N-acetyl-alpha-D-glucosamine: R332 and K350. The active-site Proton acceptor is the H362. Positions 365 and 376 each coordinate UDP-N-acetyl-alpha-D-glucosamine. Acetyl-CoA is bound by residues 385-386 (NY), S404, A422, and R439.

In the N-terminal section; belongs to the N-acetylglucosamine-1-phosphate uridyltransferase family. This sequence in the C-terminal section; belongs to the transferase hexapeptide repeat family. In terms of assembly, homotrimer. The cofactor is Mg(2+).

It is found in the cytoplasm. It catalyses the reaction alpha-D-glucosamine 1-phosphate + acetyl-CoA = N-acetyl-alpha-D-glucosamine 1-phosphate + CoA + H(+). It carries out the reaction N-acetyl-alpha-D-glucosamine 1-phosphate + UTP + H(+) = UDP-N-acetyl-alpha-D-glucosamine + diphosphate. It participates in nucleotide-sugar biosynthesis; UDP-N-acetyl-alpha-D-glucosamine biosynthesis; N-acetyl-alpha-D-glucosamine 1-phosphate from alpha-D-glucosamine 6-phosphate (route II): step 2/2. It functions in the pathway nucleotide-sugar biosynthesis; UDP-N-acetyl-alpha-D-glucosamine biosynthesis; UDP-N-acetyl-alpha-D-glucosamine from N-acetyl-alpha-D-glucosamine 1-phosphate: step 1/1. The protein operates within bacterial outer membrane biogenesis; LPS lipid A biosynthesis. Functionally, catalyzes the last two sequential reactions in the de novo biosynthetic pathway for UDP-N-acetylglucosamine (UDP-GlcNAc). The C-terminal domain catalyzes the transfer of acetyl group from acetyl coenzyme A to glucosamine-1-phosphate (GlcN-1-P) to produce N-acetylglucosamine-1-phosphate (GlcNAc-1-P), which is converted into UDP-GlcNAc by the transfer of uridine 5-monophosphate (from uridine 5-triphosphate), a reaction catalyzed by the N-terminal domain. The polypeptide is Bifunctional protein GlmU (Pelotomaculum thermopropionicum (strain DSM 13744 / JCM 10971 / SI)).